The chain runs to 421 residues: 4-hydroxy-3-methylbut-2-en-1-yl diphosphate synthase (flavodoxin) (421 aa).

C298, C301, C344, and E351 together coordinate [4Fe-4S] cluster.

It belongs to the IspG family. [4Fe-4S] cluster serves as cofactor.

It catalyses the reaction (2E)-4-hydroxy-3-methylbut-2-enyl diphosphate + oxidized [flavodoxin] + H2O + 2 H(+) = 2-C-methyl-D-erythritol 2,4-cyclic diphosphate + reduced [flavodoxin]. The protein operates within isoprenoid biosynthesis; isopentenyl diphosphate biosynthesis via DXP pathway; isopentenyl diphosphate from 1-deoxy-D-xylulose 5-phosphate: step 5/6. In terms of biological role, converts 2C-methyl-D-erythritol 2,4-cyclodiphosphate (ME-2,4cPP) into 1-hydroxy-2-methyl-2-(E)-butenyl 4-diphosphate. This Neisseria meningitidis serogroup B (strain ATCC BAA-335 / MC58) protein is 4-hydroxy-3-methylbut-2-en-1-yl diphosphate synthase (flavodoxin).